We begin with the raw amino-acid sequence, 1396 residues long: uncharacterized protein (1396 aa).

Position 88–95 (88–95 (AYKKWGRS)) interacts with ATP. Disordered stretches follow at residues 146–165 (EKIH…LSPT) and 198–388 (KPCS…VKDL). Residues 198–221 (KPCSYSSSSSSSTVPPASTDTSSP) are compositionally biased toward low complexity. The span at 242 to 268 (MHEKAQSRSRHEKESKLSSSTIEEKPA) shows a compositional bias: basic and acidic residues. The span at 286-300 (SWSSGSSEAGSSSSG) shows a compositional bias: low complexity. A compositionally biased stretch (basic residues) spans 312–327 (VKVRHKAREIRNRKGR). 2 positions are modified to phosphoserine: Ser817 and Ser1083. The disordered stretch occupies residues 1113 to 1137 (PISASELSPGGGSESEFESEKDEAS). Phosphoserine is present on residues Ser1197 and Ser1339. Positions 1347–1396 (TGERGSETKPNGLHRKMCSSASSDTGDTGSEAGGEWVGPSREELFSRTHL) are disordered. Residues 1365-1376 (SSASSDTGDTGS) are compositionally biased toward low complexity. Residues 1386–1396 (SREELFSRTHL) show a composition bias toward basic and acidic residues.

This is an uncharacterized protein from Mus musculus (Mouse).